A 363-amino-acid chain; its full sequence is Chorismate synthase (363 aa).

NADP(+)-binding residues include Arg-48 and Arg-54. FMN is bound by residues 125-127 (RSS), 237-238 (NA), Gly-277, 292-296 (KPTSS), and Arg-318.

It belongs to the chorismate synthase family. In terms of assembly, homotetramer. Requires FMNH2 as cofactor.

It carries out the reaction 5-O-(1-carboxyvinyl)-3-phosphoshikimate = chorismate + phosphate. It participates in metabolic intermediate biosynthesis; chorismate biosynthesis; chorismate from D-erythrose 4-phosphate and phosphoenolpyruvate: step 7/7. Catalyzes the anti-1,4-elimination of the C-3 phosphate and the C-6 proR hydrogen from 5-enolpyruvylshikimate-3-phosphate (EPSP) to yield chorismate, which is the branch point compound that serves as the starting substrate for the three terminal pathways of aromatic amino acid biosynthesis. This reaction introduces a second double bond into the aromatic ring system. This is Chorismate synthase from Ectopseudomonas mendocina (strain ymp) (Pseudomonas mendocina).